Reading from the N-terminus, the 326-residue chain is 5,10-methylenetetrahydromethanopterin reductase (326 aa).

This sequence belongs to the mer family.

The protein localises to the cytoplasm. It carries out the reaction 5-methyl-5,6,7,8-tetrahydromethanopterin + oxidized coenzyme F420-(gamma-L-Glu)(n) + H(+) = 5,10-methylenetetrahydromethanopterin + reduced coenzyme F420-(gamma-L-Glu)(n). The protein operates within one-carbon metabolism; methanogenesis from CO(2); methyl-coenzyme M from 5,10-methylene-5,6,7,8-tetrahydromethanopterin: step 1/2. In terms of biological role, catalyzes the reversible reduction of methylene-H(4)MPT to methyl-H(4)MPT. In Methanolobus tindarius, this protein is 5,10-methylenetetrahydromethanopterin reductase.